The chain runs to 415 residues: Gamma-glutamyl phosphate reductase (415 aa).

It belongs to the gamma-glutamyl phosphate reductase family.

The protein localises to the cytoplasm. The enzyme catalyses L-glutamate 5-semialdehyde + phosphate + NADP(+) = L-glutamyl 5-phosphate + NADPH + H(+). It participates in amino-acid biosynthesis; L-proline biosynthesis; L-glutamate 5-semialdehyde from L-glutamate: step 2/2. Functionally, catalyzes the NADPH-dependent reduction of L-glutamate 5-phosphate into L-glutamate 5-semialdehyde and phosphate. The product spontaneously undergoes cyclization to form 1-pyrroline-5-carboxylate. This is Gamma-glutamyl phosphate reductase from Lachnospira eligens (strain ATCC 27750 / DSM 3376 / VPI C15-48 / C15-B4) (Eubacterium eligens).